The chain runs to 270 residues: Splicing factor YJU2 (270 aa).

Residues 1–32 (MSERKVLNKYIPPDYDPSIRPPKKKKKFQGPN) are disordered. Zn(2+)-binding residues include cysteine 48, cysteine 51, cysteine 84, and cysteine 87. Positions 251 to 270 (PNFQPPKYAKRKMEKKKVLV) are disordered. Residues 258–270 (YAKRKMEKKKVLV) show a composition bias toward basic residues.

This sequence belongs to the CWC16 family. YJU2 subfamily. Component of the spliceosome. Present in the activated B complex, the catalytically activated B* complex which catalyzes the branching, the catalytic step 1 C complex catalyzing the exon ligation, and the postcatalytic P complex containing the ligated exons (mRNA) and the excised lariat intron. Belongs to the 40S cdc5-associated complex (or cwf complex), a spliceosome sub-complex reminiscent of a late-stage spliceosome composed of the U2, U5 and U6 snRNAs and at least brr2, cdc5, cwf2/prp3, cwf3/syf1, cwf4/syf3, cwf5/ecm2, spp42/cwf6, cwf7/spf27, cwf8, cwf9, cwf10, cwf11, cwf12, prp45/cwf13, cwf14, cwf15, cwf16, cwf17, cwf18, cwf19, cwf20, cwf21, cwf22, cwf23, cwf24, cwf25, cwf26, cyp7/cwf27, cwf28, cwf29/ist3, lea1, msl1, prp5/cwf1, prp10, prp12/sap130, prp17, prp22, sap61, sap62, sap114, sap145, slu7, smb1, smd1, smd3, smf1, smg1 and syf2.

The protein localises to the nucleus. Functionally, part of the spliceosome which catalyzes two sequential transesterification reactions, first the excision of the non-coding intron from pre-mRNA and then the ligation of the coding exons to form the mature mRNA. Plays a role in stabilizing the structure of the spliceosome catalytic core and docking of the branch helix into the active site, producing 5'-exon and lariat intron-3'-intermediates. The polypeptide is Splicing factor YJU2 (cwf16) (Schizosaccharomyces pombe (strain 972 / ATCC 24843) (Fission yeast)).